A 547-amino-acid chain; its full sequence is Glucocorticoid-induced transcript 1 protein (547 aa).

Residues 1 to 13 (MSTASSSSSSSSS) show a composition bias toward low complexity. Disordered stretches follow at residues 1–55 (MSTA…APAA) and 72–285 (LLRG…LSNI). A Phosphoserine modification is found at S20. Residues 26-38 (SAAGSPPAVAAAG) are compositionally biased toward low complexity. Gly residues predominate over residues 39–50 (SGNGAGGGGGVG). Residues S79, S105, S107, and S108 each carry the phosphoserine modification. Positions 86 to 105 (AAAAASLGSLPGPGAARGPS) are enriched in low complexity. T110 is subject to Phosphothreonine. Positions 130–145 (RSPESHRRSSSPERRS) are enriched in basic and acidic residues. The span at 162–177 (RTSSTIRRTSSLDTIT) shows a compositional bias: low complexity. Phosphoserine is present on residues S171 and S172. 2 positions are modified to phosphothreonine: T175 and T177. Residues 187-201 (RDPHVHYPSCMKDKA) show a composition bias toward basic and acidic residues. S223 is modified (phosphoserine). Residues 225–254 (GSADQLKEQIAKLRQQLQRSKQSSRHSKEK) adopt a coiled-coil conformation. The span at 236 to 245 (KLRQQLQRSK) shows a compositional bias: low complexity. S258 bears the Phosphoserine mark. The segment covering 265–276 (ITISHTQATGSR) has biased composition (polar residues). Position 266 is a phosphothreonine (T266). S303 is modified (phosphoserine). The segment covering 319-331 (EVSKPLDIPDGRR) has biased composition (basic and acidic residues). The segment at 319 to 417 (EVSKPLDIPD…KPNNSYMFKR (99 aa)) is disordered. Over residues 339 to 356 (RSSSTRSIDTQTPSVQER) the composition is skewed to polar residues. Residue T343 is modified to Phosphothreonine. Phosphoserine is present on S345. T350 bears the Phosphothreonine mark. Residues 357–369 (SSSCSSHSPCVSP) show a composition bias toward low complexity. S394, S398, S406, S412, and S480 each carry phosphoserine. Residues 505–520 (SLSDDTSTAGSMEASV) are compositionally biased toward polar residues. The segment at 505-530 (SLSDDTSTAGSMEASVQQPSQQQQLL) is disordered. A compositionally biased stretch (low complexity) spans 521–530 (QQPSQQQQLL).

As to expression, predominantly expressed in lung, spleen, thymus and testis and, at lower levels, in brain, bone marrow, peripheral leukocytes, skin and trachea.

The polypeptide is Glucocorticoid-induced transcript 1 protein (GLCCI1) (Homo sapiens (Human)).